The primary structure comprises 270 residues: UPF0162 protein VC_2176 (270 aa).

The protein belongs to the UPF0162 family.

The protein is UPF0162 protein VC_2176 of Vibrio cholerae serotype O1 (strain ATCC 39315 / El Tor Inaba N16961).